The following is a 510-amino-acid chain: Glutamate--tRNA ligase (510 aa).

Residues 15–25 (PSPTGDPHVGT) carry the 'HIGH' region motif. The short motif at 256-260 (KISKR) is the 'KMSKS' region element. Lys-259 lines the ATP pocket.

The protein belongs to the class-I aminoacyl-tRNA synthetase family. Glutamate--tRNA ligase type 1 subfamily. Monomer.

The protein localises to the cytoplasm. The catalysed reaction is tRNA(Glu) + L-glutamate + ATP = L-glutamyl-tRNA(Glu) + AMP + diphosphate. Functionally, catalyzes the attachment of glutamate to tRNA(Glu) in a two-step reaction: glutamate is first activated by ATP to form Glu-AMP and then transferred to the acceptor end of tRNA(Glu). This chain is Glutamate--tRNA ligase, found in Fusobacterium nucleatum subsp. nucleatum (strain ATCC 25586 / DSM 15643 / BCRC 10681 / CIP 101130 / JCM 8532 / KCTC 2640 / LMG 13131 / VPI 4355).